Reading from the N-terminus, the 244-residue chain is MGGREATMVLMDENGKRCDGRTVDEPRRIMIKAGGLKNADGSSYIEFGDNKILVGVFGPRDVHPKHMSDTDTGILRVRYHMEPFSVGERKNPAPSRREIEISKVIKEALEPAVMLEKFPRTAVDVFIEVLQADGGTRCAALTAASVALADAGIPMRDMVAAIAAGKVADTVILDVNNEEDQAGQADMPIGYMPNLEKITLLQLDGVLTPEEYKKCIQVGVDGCKLVYELQKKALNDKYFGNKGD.

This sequence belongs to the RNase PH family. Rrp41 subfamily. Component of the archaeal exosome complex. Forms a hexameric ring-like arrangement composed of 3 Rrp41-Rrp42 heterodimers. The hexameric ring associates with a trimer of Rrp4 and/or Csl4 subunits.

It is found in the cytoplasm. Catalytic component of the exosome, which is a complex involved in RNA degradation. Has 3'-&gt;5' exoribonuclease activity. Can also synthesize heteromeric RNA-tails. The sequence is that of Exosome complex component Rrp41 from Nitrosopumilus maritimus (strain SCM1).